Consider the following 203-residue polypeptide: Type III effector protein HopBF1 (203 aa).

The segment at 1–23 (MFNVSNNVAPSRYQGPSSTSVTP) is disordered. ATP is bound by residues Ser40, Gln41, Lys42, Asp107, Ile109, and Asp114. Residue Asp155 is part of the active site. Gln157 is a binding site for ATP.

Belongs to the HopBF1 family.

The protein localises to the secreted. The protein resides in the host cell. The catalysed reaction is L-seryl-[protein] + ATP = O-phospho-L-seryl-[protein] + ADP + H(+). In terms of biological role, effector protein that targets and inactivates the eukaryotic molecular chaperone HSP90 during infection. HopBF1 is recognized by HSP90 as a host client. As a result, HopBF1 phosphorylates HSP90, leading to the inactivation of the HSP90 ATPase activity and chaperone function. In vitro, can phosphorylate the recombinant yeast HSP82 (HSP90) and human HSP 90-beta on Ser-108. In Ewingella americana (strain ATCC 33852 / DSM 4580 / CCUG 14506 / JCM 5911 / LMG 7869 / NCTC 12157 / CDC 1468-78), this protein is Type III effector protein HopBF1.